The following is a 213-amino-acid chain: Probable nicotinate-nucleotide adenylyltransferase (213 aa).

A disordered region spans residues 194 to 213 (RKPNNGEAKDGDVKDEEAVR). A compositionally biased stretch (basic and acidic residues) spans 200–213 (EAKDGDVKDEEAVR).

It belongs to the NadD family.

The catalysed reaction is nicotinate beta-D-ribonucleotide + ATP + H(+) = deamido-NAD(+) + diphosphate. The protein operates within cofactor biosynthesis; NAD(+) biosynthesis; deamido-NAD(+) from nicotinate D-ribonucleotide: step 1/1. In terms of biological role, catalyzes the reversible adenylation of nicotinate mononucleotide (NaMN) to nicotinic acid adenine dinucleotide (NaAD). This is Probable nicotinate-nucleotide adenylyltransferase from Mycolicibacterium smegmatis (strain ATCC 700084 / mc(2)155) (Mycobacterium smegmatis).